A 241-amino-acid chain; its full sequence is Ribonuclease PH (241 aa).

Phosphate contacts are provided by residues Arg-89 and 127–129; that span reads GTR.

The protein belongs to the RNase PH family. Homohexameric ring arranged as a trimer of dimers.

It catalyses the reaction tRNA(n+1) + phosphate = tRNA(n) + a ribonucleoside 5'-diphosphate. Functionally, phosphorolytic 3'-5' exoribonuclease that plays an important role in tRNA 3'-end maturation. Removes nucleotide residues following the 3'-CCA terminus of tRNAs; can also add nucleotides to the ends of RNA molecules by using nucleoside diphosphates as substrates, but this may not be physiologically important. Probably plays a role in initiation of 16S rRNA degradation (leading to ribosome degradation) during starvation. The chain is Ribonuclease PH from Stenotrophomonas maltophilia (strain K279a).